Reading from the N-terminus, the 333-residue chain is Beta-ketoacyl-[acyl-carrier-protein] synthase III (333 aa).

Residues cysteine 116 and histidine 258 contribute to the active site. Residues 259-263 (QANQR) form an ACP-binding region. Asparagine 288 is a catalytic residue.

This sequence belongs to the thiolase-like superfamily. FabH family. In terms of assembly, homodimer.

It localises to the cytoplasm. The catalysed reaction is malonyl-[ACP] + acetyl-CoA + H(+) = 3-oxobutanoyl-[ACP] + CO2 + CoA. Its pathway is lipid metabolism; fatty acid biosynthesis. Catalyzes the condensation reaction of fatty acid synthesis by the addition to an acyl acceptor of two carbons from malonyl-ACP. Catalyzes the first condensation reaction which initiates fatty acid synthesis and may therefore play a role in governing the total rate of fatty acid production. Possesses both acetoacetyl-ACP synthase and acetyl transacylase activities. Its substrate specificity determines the biosynthesis of branched-chain and/or straight-chain of fatty acids. This is Beta-ketoacyl-[acyl-carrier-protein] synthase III from Microcystis aeruginosa (strain NIES-843 / IAM M-2473).